Reading from the N-terminus, the 142-residue chain is uncharacterized protein (142 aa).

The segment at 19–54 (IHTTPHPHTPHHTHHTHTTPTPTPHPHTHTPTPERS) is disordered. The span at 26–35 (HTPHHTHHTH) shows a compositional bias: basic residues.

This is an uncharacterized protein from Saccharomyces cerevisiae (strain ATCC 204508 / S288c) (Baker's yeast).